The primary structure comprises 156 residues: Ribosome maturation factor RimP (156 aa).

Belongs to the RimP family.

Its subcellular location is the cytoplasm. Its function is as follows. Required for maturation of 30S ribosomal subunits. This Bacillus thuringiensis (strain Al Hakam) protein is Ribosome maturation factor RimP.